Consider the following 30-residue polypeptide: Peptidase 1 (30 aa).

Belongs to the peptidase C1 family.

Its subcellular location is the secreted. It carries out the reaction Broad endopeptidase specificity.. Its function is as follows. Thiol protease that hydrolyzes proteins, with a preference for Phe or basic residues. This chain is Peptidase 1 (DERM1), found in Dermatophagoides microceras (House dust mite).